The primary structure comprises 151 residues: Probable cGMP 3',5'-cyclic phosphodiesterase subunit delta (151 aa).

This sequence belongs to the PDE6D/unc-119 family. As to quaternary structure, interacts with Pde6.

Its subcellular location is the nucleus. It localises to the cytoplasm. The sequence is that of Probable cGMP 3',5'-cyclic phosphodiesterase subunit delta from Aedes aegypti (Yellowfever mosquito).